Here is a 152-residue protein sequence, read N- to C-terminus: Glycine cleavage system H protein, mitochondrial (152 aa).

A mitochondrion-targeting transit peptide spans 1–31; the sequence is MALRMWASSTANALRLSSATRPHYSPLSRCF. The 83-residue stretch at 53-135 folds into the Lipoyl-binding domain; that stretch reads VATVGITDHA…YEDGWMIKVK (83 aa). At Lys-94 the chain carries N6-lipoyllysine.

This sequence belongs to the GcvH family. In terms of assembly, the glycine cleavage system is composed of four proteins: P, T, L and H. Requires (R)-lipoate as cofactor.

The protein localises to the mitochondrion. The glycine cleavage system catalyzes the degradation of glycine. The H protein shuttles the methylamine group of glycine from the P protein to the T protein. The polypeptide is Glycine cleavage system H protein, mitochondrial (GDCSH) (Flaveria pubescens (Yellowtops)).